A 141-amino-acid chain; its full sequence is Extracellular globin-1 (141 aa).

The region spanning 1–141 is the Globin domain; it reads DCNTLKRFKV…YAVIAAGIKP (141 aa). An intrachain disulfide couples C2 to C131. H94 contributes to the heme b binding site.

It belongs to the globin family. In terms of assembly, the giant hemoglobins of worms are formed of a monomeric subunit and a disulfide-bonded trimer. This subunit is monomeric.

The protein resides in the secreted. The sequence is that of Extracellular globin-1 from Metaphire sieboldi (Earthworm).